Here is a 567-residue protein sequence, read N- to C-terminus: uncharacterized protein (567 aa).

Helical transmembrane passes span 20-40, 69-89, 95-115, 126-146, 168-188, and 528-548; these read FTIL…SGVL, SLET…SVFI, AYLT…VALI, ILLN…FMCL, IPLV…YLLF, and IFGS…LLAI.

It localises to the cell membrane. This is an uncharacterized protein from Escherichia coli (strain K12).